A 929-amino-acid chain; its full sequence is Band 4.1-like protein 3 (929 aa).

N-acetylmethionine is present on methionine 1. The interval 1 to 72 is disordered; sequence MTTESGSDSE…STPVKREIGD (72 aa). Threonine 2 carries the N-acetylthreonine; in Band 4.1-like protein 3, N-terminally processed modification. Positions 20-33 are enriched in low complexity; the sequence is QEAAGPQGQAGAQP. Position 96 is a phosphoserine (serine 96). Residues 118-399 form the FERM domain; sequence MQCKVTLLDG…EHHTFFRLLL (282 aa). A hydrophilic region spans residues 402–528; it reads APPKKFLTLG…PVTALRHEGK (127 aa). Residues serine 428, serine 451, and serine 486 each carry the phosphoserine modification. A disordered region spans residues 490–554; it reads LITTVTPEKK…TESDQEEDAE (65 aa). Phosphothreonine is present on threonine 495. Positions 496 to 516 are enriched in basic and acidic residues; the sequence is PEKKAEEERVEEEDRRKKAEE. Threonine 518 is subject to Phosphothreonine. Residues 523-536 show a composition bias toward basic and acidic residues; sequence LRHEGKTDSERTDT. Phosphoserine occurs at positions 525 and 543. Threonine 545 bears the Phosphothreonine mark. Phosphoserine is present on serine 547. Positions 559-602 are spectrin--actin-binding; the sequence is DLDKTQDELMKHQTNISELKRTFLETSTETALTNEWEKRLSTSP. 3 disordered regions span residues 608–630, 665–689, and 705–807; these read RQED…SGEK, LETK…STEK, and VHAS…SPGG. Threonine 725 carries the phosphothreonine modification. Basic and acidic residues predominate over residues 726 to 737; the sequence is PTDRRHTGKGKE. The segment at 777 to 929 is C-terminal (CTD); sequence RTSEGLEQKS…TEITPEDGED (153 aa). The span at 789-802 shows a compositional bias: low complexity; the sequence is ESSTVRVESTSVGS. Residues serine 802 and serine 804 each carry the phosphoserine modification. Threonine 923 is modified (phosphothreonine).

Interacts (via FERM domain) with CADM1. Interacts (via FERM domain) with PRMT3; the interaction is direct and inhibits the protein-arginine N-methyltransferase activity of PRMT3. Interacts with PRMT5. Interacts with PRMT6. As to quaternary structure, has the complete spectrin--actin-binding (SAB) domain and fully interacts with spectrin and actin. Detected in brain (at protein level). Highest expression in brain, lower in testis, adrenal gland, heart and kidney. Also present in muscle and epithelial cells. Isoform 1 is expressed in brain, isoform 2 is expressed in heart and isoform 3 is mostly expressed in kidney but also in heart and brain. Isoform 6 seems to be most abundant in kidney while isoform 4 and isoform 5 are predominantly expressed in heart and brain.

The protein localises to the cytoplasm. It localises to the cytoskeleton. The protein resides in the cell membrane. It is found in the cell junction. Its function is as follows. Tumor suppressor that inhibits cell proliferation and promotes apoptosis. Modulates the activity of protein arginine N-methyltransferases, including PRMT3 and PRMT5. The chain is Band 4.1-like protein 3 from Mus musculus (Mouse).